The chain runs to 81 residues: Tissue- and phase-specific nuclear protein (81 aa).

As to expression, expressed in oviduct, where expression levels are higher in uterine sections than in tuba sections. No expression detected in small intestine and liver (at protein level).

The protein localises to the nucleus. This is Tissue- and phase-specific nuclear protein from Podarcis siculus (Italian wall lizard).